A 276-amino-acid polypeptide reads, in one-letter code: RRP15-like protein (276 aa).

Disordered regions lie at residues 1 to 132 (MALL…QLRV) and 201 to 276 (KRAK…DGEE). Basic and acidic residues-rich tracts occupy residues 75–95 (FQKD…KADV) and 226–245 (KGSS…DFMT). Over residues 254–276 (EEDDDEEGHNDEADDSDYDDGEE) the composition is skewed to acidic residues. S269 carries the phosphoserine modification. Y271 is subject to Phosphotyrosine.

The protein belongs to the RRP15 family.

This Drosophila melanogaster (Fruit fly) protein is RRP15-like protein.